The sequence spans 202 residues: Na(+)-translocating NADH-quinone reductase subunit E (202 aa).

6 helical membrane-spanning segments follow: residues 11 to 31 (SVFV…FLAI), 35 to 55 (IDAA…TVPV), 81 to 101 (FLGL…MEMV), 114 to 134 (GVFL…LLMV), 144 to 164 (VVFG…LAGI), and 182 to 202 (ITFI…GIAL).

The protein belongs to the NqrDE/RnfAE family. Composed of six subunits; NqrA, NqrB, NqrC, NqrD, NqrE and NqrF.

It localises to the cell inner membrane. It carries out the reaction a ubiquinone + n Na(+)(in) + NADH + H(+) = a ubiquinol + n Na(+)(out) + NAD(+). NQR complex catalyzes the reduction of ubiquinone-1 to ubiquinol by two successive reactions, coupled with the transport of Na(+) ions from the cytoplasm to the periplasm. NqrA to NqrE are probably involved in the second step, the conversion of ubisemiquinone to ubiquinol. The polypeptide is Na(+)-translocating NADH-quinone reductase subunit E (Saccharophagus degradans (strain 2-40 / ATCC 43961 / DSM 17024)).